The primary structure comprises 319 residues: Thioredoxin reductase (319 aa).

FAD contacts are provided by residues 11–14 (SGPA), 40–41 (VA), Q45, N54, V87, C145, D288, and 295–297 (RQA). C142 and C145 are disulfide-bonded.

It belongs to the class-II pyridine nucleotide-disulfide oxidoreductase family. In terms of assembly, homodimer. The cofactor is FAD.

It localises to the cytoplasm. The catalysed reaction is [thioredoxin]-dithiol + NADP(+) = [thioredoxin]-disulfide + NADPH + H(+). This is Thioredoxin reductase (TRR1) from Eremothecium gossypii (strain ATCC 10895 / CBS 109.51 / FGSC 9923 / NRRL Y-1056) (Yeast).